The following is a 431-amino-acid chain: Enolase (431 aa).

Gln-166 contributes to the (2R)-2-phosphoglycerate binding site. The active-site Proton donor is the Glu-208. Residues Asp-245, Glu-288, and Asp-315 each contribute to the Mg(2+) site. (2R)-2-phosphoglycerate contacts are provided by Lys-340, Arg-369, Ser-370, and Lys-391. Residue Lys-340 is the Proton acceptor of the active site.

Belongs to the enolase family. Mg(2+) serves as cofactor.

Its subcellular location is the cytoplasm. The protein resides in the secreted. The protein localises to the cell surface. The enzyme catalyses (2R)-2-phosphoglycerate = phosphoenolpyruvate + H2O. Its pathway is carbohydrate degradation; glycolysis; pyruvate from D-glyceraldehyde 3-phosphate: step 4/5. Catalyzes the reversible conversion of 2-phosphoglycerate (2-PG) into phosphoenolpyruvate (PEP). It is essential for the degradation of carbohydrates via glycolysis. This is Enolase from Clostridium botulinum (strain Okra / Type B1).